Consider the following 447-residue polypeptide: Signal recognition particle 54 kDa protein (447 aa).

GTP contacts are provided by residues 105 to 112 (GVQGSGKT), 187 to 191 (DTAGR), and 247 to 250 (TKMD).

The protein belongs to the GTP-binding SRP family. SRP54 subfamily. In terms of assembly, part of the signal recognition particle protein translocation system, which is composed of SRP and FtsY. Archaeal SRP consists of a 7S RNA molecule of 300 nucleotides and two protein subunits: SRP54 and SRP19.

It is found in the cytoplasm. It carries out the reaction GTP + H2O = GDP + phosphate + H(+). In terms of biological role, involved in targeting and insertion of nascent membrane proteins into the cytoplasmic membrane. Binds to the hydrophobic signal sequence of the ribosome-nascent chain (RNC) as it emerges from the ribosomes. The SRP-RNC complex is then targeted to the cytoplasmic membrane where it interacts with the SRP receptor FtsY. The polypeptide is Signal recognition particle 54 kDa protein (Hyperthermus butylicus (strain DSM 5456 / JCM 9403 / PLM1-5)).